The primary structure comprises 316 residues: Cytochrome c oxidase assembly protein COX18, mitochondrial (316 aa).

Residues 164 to 184 (WKNALLPMVQIPLWVTVSMGI) form a helical membrane-spanning segment. The Mitochondrial matrix segment spans residues 185 to 213 (RTLTETQLIESFYPSWFSALGFSSFDLSS). Residues 214–234 (PLVAMPLLAPILVGTLAVLNV) form a helical membrane-spanning segment. The Mitochondrial intermembrane segment spans residues 235-274 (ELNGRLMFSSSLSSQGIKTISRNSTRVQEAMTSILNVSRL). Residues 275-295 (GCVVMLAMSSQAPFLLSLYWI) traverse the membrane as a helical segment. Residues 296–316 (SSQLFSLVQNIILNWIYPYQR) are Mitochondrial matrix-facing.

Belongs to the OXA1/ALB3/YidC family. As to quaternary structure, interacts with PNT1 and MSS2.

It is found in the mitochondrion inner membrane. Functionally, required for the insertion of integral membrane proteins into the mitochondrial inner membrane. Essential for the activity and assembly of cytochrome c oxidase. Plays a central role in the translocation and export of the C-terminal part of the COX2 protein into the mitochondrial intermembrane space. The protein is Cytochrome c oxidase assembly protein COX18, mitochondrial (COX18) of Saccharomyces cerevisiae (strain ATCC 204508 / S288c) (Baker's yeast).